We begin with the raw amino-acid sequence, 445 residues long: Glutamate-1-semialdehyde 2,1-aminomutase (445 aa).

K281 is modified (N6-(pyridoxal phosphate)lysine).

Belongs to the class-III pyridoxal-phosphate-dependent aminotransferase family. HemL subfamily. In terms of assembly, homodimer. The cofactor is pyridoxal 5'-phosphate.

It localises to the cytoplasm. The catalysed reaction is (S)-4-amino-5-oxopentanoate = 5-aminolevulinate. It participates in porphyrin-containing compound metabolism; protoporphyrin-IX biosynthesis; 5-aminolevulinate from L-glutamyl-tRNA(Glu): step 2/2. This Nocardioides sp. (strain ATCC BAA-499 / JS614) protein is Glutamate-1-semialdehyde 2,1-aminomutase.